We begin with the raw amino-acid sequence, 347 residues long: Phenylalanine--tRNA ligase alpha subunit (347 aa).

Residues 83-111 (QNLSGGDDSGADPTFDPTLPGTRPSLGHI) form a disordered region. A Mg(2+)-binding site is contributed by glutamate 274.

It belongs to the class-II aminoacyl-tRNA synthetase family. Phe-tRNA synthetase alpha subunit type 1 subfamily. In terms of assembly, tetramer of two alpha and two beta subunits. The cofactor is Mg(2+).

It is found in the cytoplasm. The enzyme catalyses tRNA(Phe) + L-phenylalanine + ATP = L-phenylalanyl-tRNA(Phe) + AMP + diphosphate + H(+). In Rhodopirellula baltica (strain DSM 10527 / NCIMB 13988 / SH1), this protein is Phenylalanine--tRNA ligase alpha subunit.